A 148-amino-acid chain; its full sequence is Protoporphyrinogen IX oxidase (148 aa).

The next 4 helical transmembrane spans lie at 7–27 (YFLW…AALF), 58–78 (SFIA…MLLI), 86–106 (GGWL…HFYC), and 128–148 (FNEA…VKPF). Histidine 15 lines the heme pocket. Heme is bound at residue lysine 92.

It belongs to the HemJ family. In terms of assembly, homodimer. The cofactor is heme b.

The protein resides in the cell membrane. It catalyses the reaction protoporphyrinogen IX + 3 A = protoporphyrin IX + 3 AH2. It functions in the pathway porphyrin-containing compound metabolism; protoporphyrin-IX biosynthesis; protoporphyrin-IX from protoporphyrinogen-IX: step 1/1. Catalyzes the oxidation of protoporphyrinogen IX to protoporphyrin IX. Is involved in the biosynthesis of tetrapyrrole molecules like heme. Does not use oxygen or artificial electron acceptors such as menadione or benzoquinone. This chain is Protoporphyrinogen IX oxidase, found in Helicobacter pylori (strain ATCC 700392 / 26695) (Campylobacter pylori).